Consider the following 290-residue polypeptide: 4-hydroxybenzoate octaprenyltransferase (290 aa).

8 helical membrane passes run 23-43 (IGALLLLWPTLWALWVATPGV), 46-66 (LWILAVFVAGVWLMRAAGCVV), 99-119 (LFVVLVLISFLLVLTLNTMTI), 141-161 (LPQVVLGAAFGWSIPMAFAAV), 163-183 (ESVPLSCWLMFLANILWAVAY), 213-233 (LIIGIFQIGVLALMAIIGELN), 234-254 (GLGWGYYWSILVAGALFVYQQ), and 268-288 (AFMNNNYVGLVLFLGLAMSYW).

This sequence belongs to the UbiA prenyltransferase family. Mg(2+) serves as cofactor.

Its subcellular location is the cell inner membrane. It catalyses the reaction all-trans-octaprenyl diphosphate + 4-hydroxybenzoate = 4-hydroxy-3-(all-trans-octaprenyl)benzoate + diphosphate. It participates in cofactor biosynthesis; ubiquinone biosynthesis. Its function is as follows. Catalyzes the prenylation of para-hydroxybenzoate (PHB) with an all-trans polyprenyl group. Mediates the second step in the final reaction sequence of ubiquinone-8 (UQ-8) biosynthesis, which is the condensation of the polyisoprenoid side chain with PHB, generating the first membrane-bound Q intermediate 3-octaprenyl-4-hydroxybenzoate. In Escherichia coli (strain UTI89 / UPEC), this protein is 4-hydroxybenzoate octaprenyltransferase.